A 592-amino-acid polypeptide reads, in one-letter code: V-type ATP synthase alpha chain 2 (592 aa).

237–244 (GGFGTGKT) lines the ATP pocket.

The protein belongs to the ATPase alpha/beta chains family.

The catalysed reaction is ATP + H2O + 4 H(+)(in) = ADP + phosphate + 5 H(+)(out). In terms of biological role, produces ATP from ADP in the presence of a proton gradient across the membrane. The V-type alpha chain is a catalytic subunit. The protein is V-type ATP synthase alpha chain 2 of Clostridium tetani (strain Massachusetts / E88).